The chain runs to 245 residues: 5-oxoprolinase subunit A (245 aa).

Belongs to the LamB/PxpA family. As to quaternary structure, forms a complex composed of PxpA, PxpB and PxpC.

It catalyses the reaction 5-oxo-L-proline + ATP + 2 H2O = L-glutamate + ADP + phosphate + H(+). Its function is as follows. Catalyzes the cleavage of 5-oxoproline to form L-glutamate coupled to the hydrolysis of ATP to ADP and inorganic phosphate. This Haemophilus influenzae (strain PittGG) protein is 5-oxoprolinase subunit A.